The sequence spans 273 residues: Proteasome subunit beta (273 aa).

A propeptide spans 1-50 (MRKDGARLALPLFDPRHDPGPDFAALVSRDAARTVPTSGDGSLGAQVPHG) (removed in mature form; by autocatalysis). The active-site Nucleophile is threonine 51.

Belongs to the peptidase T1B family. As to quaternary structure, the 20S proteasome core is composed of 14 alpha and 14 beta subunits that assemble into four stacked heptameric rings, resulting in a barrel-shaped structure. The two inner rings, each composed of seven catalytic beta subunits, are sandwiched by two outer rings, each composed of seven alpha subunits. The catalytic chamber with the active sites is on the inside of the barrel. Has a gated structure, the ends of the cylinder being occluded by the N-termini of the alpha-subunits. Is capped by the proteasome-associated ATPase, ARC.

Its subcellular location is the cytoplasm. It carries out the reaction Cleavage of peptide bonds with very broad specificity.. The protein operates within protein degradation; proteasomal Pup-dependent pathway. With respect to regulation, the formation of the proteasomal ATPase ARC-20S proteasome complex, likely via the docking of the C-termini of ARC into the intersubunit pockets in the alpha-rings, may trigger opening of the gate for substrate entry. Interconversion between the open-gate and close-gate conformations leads to a dynamic regulation of the 20S proteasome proteolysis activity. Its function is as follows. Component of the proteasome core, a large protease complex with broad specificity involved in protein degradation. The protein is Proteasome subunit beta of Acidimicrobium ferrooxidans (strain DSM 10331 / JCM 15462 / NBRC 103882 / ICP).